Reading from the N-terminus, the 303-residue chain is UDP-N-acetylenolpyruvoylglucosamine reductase (303 aa).

An FAD-binding PCMH-type domain is found at 27–217 (KVGGISQVFY…QTVRKLTQPI (191 aa)). Arginine 175 is a catalytic residue. Residue serine 224 is the Proton donor of the active site. Residue glutamate 294 is part of the active site.

The protein belongs to the MurB family. FAD serves as cofactor.

Its subcellular location is the cytoplasm. It catalyses the reaction UDP-N-acetyl-alpha-D-muramate + NADP(+) = UDP-N-acetyl-3-O-(1-carboxyvinyl)-alpha-D-glucosamine + NADPH + H(+). Its pathway is cell wall biogenesis; peptidoglycan biosynthesis. Cell wall formation. The sequence is that of UDP-N-acetylenolpyruvoylglucosamine reductase from Orientia tsutsugamushi (strain Ikeda) (Rickettsia tsutsugamushi).